Reading from the N-terminus, the 331-residue chain is Tryptophan--tRNA ligase (331 aa).

Residues Q10–S12 and G18–N19 each bind ATP. A 'HIGH' region motif is present at residues P11–N19. L-tryptophan is bound at residue D133. Residues G145–D147, V184, and K193–S197 each bind ATP. Residues K193 to S197 carry the 'KMSKS' region motif.

The protein belongs to the class-I aminoacyl-tRNA synthetase family. In terms of assembly, homodimer.

It is found in the cytoplasm. It carries out the reaction tRNA(Trp) + L-tryptophan + ATP = L-tryptophyl-tRNA(Trp) + AMP + diphosphate + H(+). In terms of biological role, catalyzes the attachment of tryptophan to tRNA(Trp). This is Tryptophan--tRNA ligase from Listeria innocua serovar 6a (strain ATCC BAA-680 / CLIP 11262).